We begin with the raw amino-acid sequence, 167 residues long: Crossover junction endodeoxyribonuclease RuvC (167 aa).

Catalysis depends on residues Asp-7, Glu-67, and Asp-140. Mg(2+) is bound by residues Asp-7, Glu-67, and Asp-140.

The protein belongs to the RuvC family. Homodimer which binds Holliday junction (HJ) DNA. The HJ becomes 2-fold symmetrical on binding to RuvC with unstacked arms; it has a different conformation from HJ DNA in complex with RuvA. In the full resolvosome a probable DNA-RuvA(4)-RuvB(12)-RuvC(2) complex forms which resolves the HJ. Mg(2+) is required as a cofactor.

It localises to the cytoplasm. The enzyme catalyses Endonucleolytic cleavage at a junction such as a reciprocal single-stranded crossover between two homologous DNA duplexes (Holliday junction).. Functionally, the RuvA-RuvB-RuvC complex processes Holliday junction (HJ) DNA during genetic recombination and DNA repair. Endonuclease that resolves HJ intermediates. Cleaves cruciform DNA by making single-stranded nicks across the HJ at symmetrical positions within the homologous arms, yielding a 5'-phosphate and a 3'-hydroxyl group; requires a central core of homology in the junction. The consensus cleavage sequence is 5'-(A/T)TT(C/G)-3'. Cleavage occurs on the 3'-side of the TT dinucleotide at the point of strand exchange. HJ branch migration catalyzed by RuvA-RuvB allows RuvC to scan DNA until it finds its consensus sequence, where it cleaves and resolves the cruciform DNA. The polypeptide is Crossover junction endodeoxyribonuclease RuvC (Moorella thermoacetica (strain ATCC 39073 / JCM 9320)).